An 84-amino-acid chain; its full sequence is uncharacterized protein (84 aa).

Transmembrane regions (helical) follow at residues 27–47 and 52–72; these read INHH…LAML and IGHV…FVLI.

It to M.tuberculosis Rv2876.

Its subcellular location is the cell membrane. This is an uncharacterized protein from Mycobacterium leprae (strain TN).